A 582-amino-acid polypeptide reads, in one-letter code: External alternative NAD(P)H-ubiquinone oxidoreductase B2, mitochondrial (582 aa).

A mitochondrion-targeting transit peptide spans 1-38 (MRNFSVFERFSKAFKDHPSLTRILVVSTISGGGLIAYS). Residue 60–90 (KVVLLGTGWAGTSFLKNLNNSQYEVQIISPR) coordinates FAD. 223–259 (LHFVVVGGGPTGVEFAAELHDFVTEDLVSLYPRAKGS) is a binding site for NAD(+). The 36-residue stretch at 379-414 (KVMEDVSAIFSKADKDKSGTLTLKEFQEAMDDICVR) folds into the EF-hand domain. The Ca(2+) site is built by D392, D394, S396, T398, and E403. Positions 573–582 (FIFGRDSSSI) match the Microbody targeting signal motif.

It belongs to the NADH dehydrogenase family. It depends on FAD as a cofactor. In terms of tissue distribution, mostly expressed in seedlings and roots and, to a lower extent, in cotyledons, leaves, stems, buds and flowers.

The protein localises to the mitochondrion inner membrane. Its subcellular location is the peroxisome. It carries out the reaction a quinone + NADH + H(+) = a quinol + NAD(+). It catalyses the reaction a ubiquinone + NADH + H(+) = a ubiquinol + NAD(+). With respect to regulation, NADPH oxidase activity is stimulated by calcium ions. Alternative NADH-ubiquinone oxidoreductase which catalyzes the oxidation of mitochondrial NADH does not translocate protons across the inner mitochondrial membrane. Calcium-dependent NAD(P)H dehydrogenase; more efficient on NADH. Binds calcium ions. In Arabidopsis thaliana (Mouse-ear cress), this protein is External alternative NAD(P)H-ubiquinone oxidoreductase B2, mitochondrial (NDB2).